Consider the following 274-residue polypeptide: Large ribosomal subunit protein uL2 (274 aa).

Residues 223 to 274 form a disordered region; sequence VAMNPVDHPHGGGEGRTSGGRHPVSPWGMPTKGFKTRKNKSTDKYIVRRRNK.

The protein belongs to the universal ribosomal protein uL2 family. In terms of assembly, part of the 50S ribosomal subunit. Forms a bridge to the 30S subunit in the 70S ribosome.

Its function is as follows. One of the primary rRNA binding proteins. Required for association of the 30S and 50S subunits to form the 70S ribosome, for tRNA binding and peptide bond formation. It has been suggested to have peptidyltransferase activity; this is somewhat controversial. Makes several contacts with the 16S rRNA in the 70S ribosome. The chain is Large ribosomal subunit protein uL2 from Aliivibrio salmonicida (strain LFI1238) (Vibrio salmonicida (strain LFI1238)).